Consider the following 70-residue polypeptide: UPF0519 protein B (70 aa).

This sequence belongs to the UPF0519 family.

The polypeptide is UPF0519 protein B (sigN122) (Dictyostelium discoideum (Social amoeba)).